The chain runs to 43 residues: Protein PsbN (43 aa).

The helical transmembrane segment at 7 to 27 (FVVGILVALVLITAFAVYTAF) threads the bilayer.

Belongs to the PsbN family.

It localises to the cell inner membrane. Functionally, may play a role in photosystem I and II biogenesis. This Gloeobacter violaceus (strain ATCC 29082 / PCC 7421) protein is Protein PsbN.